Here is a 195-residue protein sequence, read N- to C-terminus: Probable GTP-binding protein EngB (195 aa).

In terms of domain architecture, EngB-type G spans 24–195 (ELPEIALAGR…EAWDAILEKL (172 aa)). Residues 32-39 (GRSNVGKS), 59-63 (GKTQL), 77-80 (DVPG), 144-147 (TKAD), and 176-178 (FSS) contribute to the GTP site. Mg(2+)-binding residues include serine 39 and threonine 61.

Belongs to the TRAFAC class TrmE-Era-EngA-EngB-Septin-like GTPase superfamily. EngB GTPase family. Mg(2+) serves as cofactor.

Necessary for normal cell division and for the maintenance of normal septation. The polypeptide is Probable GTP-binding protein EngB (Streptococcus pneumoniae (strain ATCC 700669 / Spain 23F-1)).